A 389-amino-acid chain; its full sequence is F-box protein At3g19880 (389 aa).

The region spanning 2 to 49 (TMMSDLTQDLVEEILSRVPITSLGAVRSTCKGWNALSKERILCIGEPK) is the F-box domain.

This Arabidopsis thaliana (Mouse-ear cress) protein is F-box protein At3g19880.